Consider the following 151-residue polypeptide: MDNNDYKKFYLIREDVLPESVVKTLKIKDALKNNPELSIYEAVKLFDLSRSAFYKYRETIFPVDEKMLDHREFTLILYVNDIVGMLAQVLNTVSKLQLSVLTIHQSVPMEEKATITLSLSAKDTTISIDEIIKALRNIEHVSKVELISMSM.

The 76-residue stretch at 74 to 149 (TLILYVNDIV…HVSKVELISM (76 aa)) folds into the ACT domain.

This sequence belongs to the UPF0735 family.

This chain is UPF0735 ACT domain-containing protein SH1278, found in Staphylococcus haemolyticus (strain JCSC1435).